The chain runs to 205 residues: Imidazole glycerol phosphate synthase subunit HisH (205 aa).

The 200-residue stretch at 6–205 (RVGIIDHGSG…LLTRWLNQLS (200 aa)) folds into the Glutamine amidotransferase type-1 domain. Catalysis depends on Cys-84, which acts as the Nucleophile. Residues His-185 and Glu-187 contribute to the active site.

As to quaternary structure, heterodimer of HisH and HisF.

The protein localises to the cytoplasm. It catalyses the reaction 5-[(5-phospho-1-deoxy-D-ribulos-1-ylimino)methylamino]-1-(5-phospho-beta-D-ribosyl)imidazole-4-carboxamide + L-glutamine = D-erythro-1-(imidazol-4-yl)glycerol 3-phosphate + 5-amino-1-(5-phospho-beta-D-ribosyl)imidazole-4-carboxamide + L-glutamate + H(+). The enzyme catalyses L-glutamine + H2O = L-glutamate + NH4(+). Its pathway is amino-acid biosynthesis; L-histidine biosynthesis; L-histidine from 5-phospho-alpha-D-ribose 1-diphosphate: step 5/9. Functionally, IGPS catalyzes the conversion of PRFAR and glutamine to IGP, AICAR and glutamate. The HisH subunit catalyzes the hydrolysis of glutamine to glutamate and ammonia as part of the synthesis of IGP and AICAR. The resulting ammonia molecule is channeled to the active site of HisF. In Cutibacterium acnes (strain DSM 16379 / KPA171202) (Propionibacterium acnes), this protein is Imidazole glycerol phosphate synthase subunit HisH.